The primary structure comprises 192 residues: MNILRLDASMRKTGSYSRILTDKLIEQLTSGKNNEVTIRDLADGIPLIDENWIKANFTDVDERTCEQKVCLVASDILVDELYKAEHIVIGLPIYNFGVPAAFKAWIDQVVRSKLTFRYGDNGPVGLVENKKAYIIIASGGTKLGTEIDFISDYLRHILGFIGITDVTFIDSSGLGRDESQTLAHAHKAIERV.

Residues S9 and 15–17 (SYS) each bind FMN.

The protein belongs to the azoreductase type 1 family. As to quaternary structure, homodimer. Requires FMN as cofactor.

It carries out the reaction 2 a quinone + NADH + H(+) = 2 a 1,4-benzosemiquinone + NAD(+). The catalysed reaction is N,N-dimethyl-1,4-phenylenediamine + anthranilate + 2 NAD(+) = 2-(4-dimethylaminophenyl)diazenylbenzoate + 2 NADH + 2 H(+). Functionally, quinone reductase that provides resistance to thiol-specific stress caused by electrophilic quinones. Also exhibits azoreductase activity. Catalyzes the reductive cleavage of the azo bond in aromatic azo compounds to the corresponding amines. In Colwellia psychrerythraea (strain 34H / ATCC BAA-681) (Vibrio psychroerythus), this protein is FMN-dependent NADH:quinone oxidoreductase 1.